Reading from the N-terminus, the 215-residue chain is ATP-dependent dethiobiotin synthetase BioD (215 aa).

13-18 (DIGKTI) is an ATP binding site. Position 17 (Thr17) interacts with Mg(2+). Residue Lys38 is part of the active site. Position 42 (Thr42) interacts with substrate. ATP contacts are provided by residues Asp50, 115–118 (EGAG), and 175–176 (NH). Mg(2+) is bound by residues Asp50 and Glu115.

This sequence belongs to the dethiobiotin synthetase family. Homodimer. Requires Mg(2+) as cofactor.

The protein localises to the cytoplasm. It catalyses the reaction (7R,8S)-7,8-diammoniononanoate + CO2 + ATP = (4R,5S)-dethiobiotin + ADP + phosphate + 3 H(+). It participates in cofactor biosynthesis; biotin biosynthesis; biotin from 7,8-diaminononanoate: step 1/2. In terms of biological role, catalyzes a mechanistically unusual reaction, the ATP-dependent insertion of CO2 between the N7 and N8 nitrogen atoms of 7,8-diaminopelargonic acid (DAPA, also called 7,8-diammoniononanoate) to form a ureido ring. The sequence is that of ATP-dependent dethiobiotin synthetase BioD from Neisseria meningitidis serogroup A / serotype 4A (strain DSM 15465 / Z2491).